Consider the following 157-residue polypeptide: 2-C-methyl-D-erythritol 2,4-cyclodiphosphate synthase (157 aa).

A divalent metal cation-binding residues include D9 and H11. 4-CDP-2-C-methyl-D-erythritol 2-phosphate is bound by residues 9–11 and 35–36; these read DVH and HS. Position 43 (H43) interacts with a divalent metal cation. Residues 57-59, 62-66, 101-107, 133-136, F140, and R143 each bind 4-CDP-2-C-methyl-D-erythritol 2-phosphate; these read DIG, FPDTD, AQKPKMA, and TTTE.

The protein belongs to the IspF family. In terms of assembly, homotrimer. Requires a divalent metal cation as cofactor.

It catalyses the reaction 4-CDP-2-C-methyl-D-erythritol 2-phosphate = 2-C-methyl-D-erythritol 2,4-cyclic diphosphate + CMP. The protein operates within isoprenoid biosynthesis; isopentenyl diphosphate biosynthesis via DXP pathway; isopentenyl diphosphate from 1-deoxy-D-xylulose 5-phosphate: step 4/6. Functionally, involved in the biosynthesis of isopentenyl diphosphate (IPP) and dimethylallyl diphosphate (DMAPP), two major building blocks of isoprenoid compounds. Catalyzes the conversion of 4-diphosphocytidyl-2-C-methyl-D-erythritol 2-phosphate (CDP-ME2P) to 2-C-methyl-D-erythritol 2,4-cyclodiphosphate (ME-CPP) with a corresponding release of cytidine 5-monophosphate (CMP). The protein is 2-C-methyl-D-erythritol 2,4-cyclodiphosphate synthase of Halalkalibacterium halodurans (strain ATCC BAA-125 / DSM 18197 / FERM 7344 / JCM 9153 / C-125) (Bacillus halodurans).